The primary structure comprises 507 residues: 3-[(3aS,4S,7aS)-7a-methyl-1,5-dioxo-octahydro-1H-inden-4-yl]propanoyl:CoA ligase (507 aa).

ATP-binding positions include 177–185, Asp-391, Arg-406, and Lys-497; that span reads TSGTTGRSK.

Belongs to the ATP-dependent AMP-binding enzyme family.

The catalysed reaction is 3-[(3aS,4S,7aS)-7a-methyl-1,5-dioxo-octahydro-1H-inden-4-yl]propanoate + ATP + CoA = 3-[(3aS,4S,7aS)-7a-methyl-1,5-dioxo-octahydro-1H-inden-4-yl]propanoyl-CoA + AMP + diphosphate. The enzyme catalyses 5-hydroxy-3-[(3aS,4S,5R,7aS)-7a-methyl-1,5-dioxo-octahydro-1H-inden-4-yl]propanoate + ATP + CoA = 3-[(3aS,4S,5R,7aS)-5-hydroxy-7a-methyl-1-oxo-octahydro-1H-inden-4-yl]propanoyl-CoA + AMP + diphosphate. Functionally, involved in the catabolism of the rings C and D of cholesterol. Catalyzes the ATP-dependent CoA thioesterification of 3aalpha-H-4alpha(3'-propanoate)-7abeta-methylhexahydro-1,5-indanedione (HIP) to yield HIP-CoA. It can also use the hydroxylated analogs of HIP, 5alpha-OH HIP and 1beta-OH HIP. It requires that the side chain at C17 is completely removed. The polypeptide is 3-[(3aS,4S,7aS)-7a-methyl-1,5-dioxo-octahydro-1H-inden-4-yl]propanoyl:CoA ligase (Mycobacterium tuberculosis (strain ATCC 25618 / H37Rv)).